The sequence spans 79 residues: UPF0337 protein YhjA (79 aa).

Residues 1 to 30 are disordered; that stretch reads MALNDKLDATKDKVSGKVKETTGKVTGDEK.

The protein belongs to the UPF0337 (CsbD) family.

The polypeptide is UPF0337 protein YhjA (yhjA) (Lactococcus lactis subsp. lactis (strain IL1403) (Streptococcus lactis)).